The sequence spans 262 residues: MKPKIKVENLTKYFGDKKVLDEISFEVYEGEIFGLLGHNGAGKTTTLRILAGIIEEYTGYVEVNGKIGYLPEERGLYRDEKVVDVLKFFGELAGMKKEEIAKSIDYWLNKLKISNYKYSKIKELSKGNQQKVQFIVSVIHNPDIVILDEPFSGLDVVNVRLLRDIIFELKEEGKTIILSTHQLEKIERLCDRVLILKKGKAVHYGKIEDICRKMAYIEYLDNGKLIKKEIPYEEAVLILKEKAEDVIKFEVRYSLEDLFLDE.

One can recognise an ABC transporter domain in the interval Ile5 to Gly223. Position 37 to 44 (Gly37 to Thr44) interacts with ATP.

This sequence belongs to the ABC transporter superfamily.

This is an uncharacterized protein from Methanocaldococcus jannaschii (strain ATCC 43067 / DSM 2661 / JAL-1 / JCM 10045 / NBRC 100440) (Methanococcus jannaschii).